The primary structure comprises 252 residues: Probable endonuclease 4 (252 aa).

Residues His-56, His-96, Glu-129, Asp-162, His-165, His-191, Asp-204, His-206, and Glu-233 each coordinate Zn(2+).

Belongs to the AP endonuclease 2 family. Zn(2+) is required as a cofactor.

It catalyses the reaction Endonucleolytic cleavage to 5'-phosphooligonucleotide end-products.. Endonuclease IV plays a role in DNA repair. It cleaves phosphodiester bonds at apurinic or apyrimidinic (AP) sites, generating a 3'-hydroxyl group and a 5'-terminal sugar phosphate. The chain is Probable endonuclease 4 from Mycobacterium leprae (strain Br4923).